The primary structure comprises 368 residues: MASDTAPQATGAGRIVISVDAMGGDRGPAAVVAGIAGSASANPGAYFIVHGDEAQIGPMIAKRKDLRGRCEIRHAPRVVTMSDKPSQVMRHGEGTSMWSCIESVRAGEATVAVSCGNTGALMAVSMIRLRKLPGVNRPAIACLWPSRNPGGFNVMLDVGADIKADAEDLAQFALMGASYARNGLSLERPRVGLLNVGTEEHKGRAELKSAQDLISANAEAGAYEYVGFLEGGDIPGRRCDVIVTDGFTGNVALKTGEGTAKLISDFLRDAFGANVLSKMAAVLALGSLKRLQKRIDPRRVNGGVFLGLNGTVVKSHGSADATGVAAAIGLAVRLARSGFHERLAARLASAGRAGQDAPQDEVAAPRQI.

It belongs to the PlsX family. As to quaternary structure, homodimer. Probably interacts with PlsY.

The protein localises to the cytoplasm. It catalyses the reaction a fatty acyl-[ACP] + phosphate = an acyl phosphate + holo-[ACP]. The protein operates within lipid metabolism; phospholipid metabolism. Its function is as follows. Catalyzes the reversible formation of acyl-phosphate (acyl-PO(4)) from acyl-[acyl-carrier-protein] (acyl-ACP). This enzyme utilizes acyl-ACP as fatty acyl donor, but not acyl-CoA. The sequence is that of Phosphate acyltransferase from Cereibacter sphaeroides (strain ATCC 17025 / ATH 2.4.3) (Rhodobacter sphaeroides).